Here is a 101-residue protein sequence, read N- to C-terminus: Small ribosomal subunit protein bS18c (101 aa).

Positions 1–19 (MDKSKQPFRKSKRSFRRRL) are enriched in basic residues. The interval 1-24 (MDKSKQPFRKSKRSFRRRLPPIGS) is disordered.

It belongs to the bacterial ribosomal protein bS18 family. Part of the 30S ribosomal subunit.

It is found in the plastid. It localises to the chloroplast. The polypeptide is Small ribosomal subunit protein bS18c (Amborella trichopoda).